Here is a 101-residue protein sequence, read N- to C-terminus: Small ribosomal subunit protein uS14 (101 aa).

The protein belongs to the universal ribosomal protein uS14 family. As to quaternary structure, part of the 30S ribosomal subunit. Contacts proteins S3 and S10.

Functionally, binds 16S rRNA, required for the assembly of 30S particles and may also be responsible for determining the conformation of the 16S rRNA at the A site. The chain is Small ribosomal subunit protein uS14 from Methylorubrum populi (strain ATCC BAA-705 / NCIMB 13946 / BJ001) (Methylobacterium populi).